Consider the following 1222-residue polypeptide: PAN2-PAN3 deadenylation complex catalytic subunit PAN2 (1222 aa).

2 WD repeats span residues 104-143 and 276-315; these read PEMTELRCMSFTAQPHKIIVAGLQSAMFIIDVEKGAIVDQ and ANVAFMLGLEVSPSGEALAINDAECSIHLWGSPSKIHFNE. A linker region spans residues 316–451; sequence IGKETEFSDI…GLKINGETKE (136 aa). A USP domain is found at 452–821; that stretch reads DPLLKYSNVE…SPCTLAYQIS (370 aa). The Exonuclease domain occupies 871-1027; it reads ALDTEFVDLE…WAVFKEYIQE (157 aa). A divalent metal cation contacts are provided by aspartate 873, glutamate 875, and aspartate 982. A disordered region spans residues 1035–1067; the sequence is TSITTTTNPNIHDANTSTTTTTAITTTPPEGHD. The segment covering 1050 to 1061 has biased composition (low complexity); it reads TSTTTTTAITTT. Aspartate 1071 contacts a divalent metal cation. Disordered regions lie at residues 1110–1152 and 1167–1222; these read PARY…LSGR and ASVT…SPMR. The span at 1119-1133 shows a compositional bias: low complexity; sequence PNPNNNNINNGVNPN. Residues 1134–1144 show a composition bias toward polar residues; that stretch reads GLSTPGSTNPI. The segment covering 1180-1191 has biased composition (low complexity); it reads NGSMSGSTPSTP. Positions 1207-1216 are enriched in gly residues; sequence SFGGAKGLTF.

The protein belongs to the peptidase C19 family. PAN2 subfamily. Forms a heterotrimer with an asymmetric homodimer of the regulatory subunit PAN3 to form the poly(A)-nuclease (PAN) deadenylation complex. Requires a divalent metal cation as cofactor.

It localises to the cytoplasm. It carries out the reaction Exonucleolytic cleavage of poly(A) to 5'-AMP.. Its activity is regulated as follows. Positively regulated by the regulatory subunit PAN3. Functionally, catalytic subunit of the poly(A)-nuclease (PAN) deadenylation complex, one of two cytoplasmic mRNA deadenylases involved in mRNA turnover. PAN specifically shortens poly(A) tails of RNA and the activity is stimulated by poly(A)-binding protein PAB1. PAN deadenylation is followed by rapid degradation of the shortened mRNA tails by the CCR4-NOT complex. Deadenylated mRNAs are then degraded by two alternative mechanisms, namely exosome-mediated 3'-5' exonucleolytic degradation, or deadenylation-dependent mRNA decaping and subsequent 5'-3' exonucleolytic degradation by XRN1. May also be involved in post-transcriptional maturation of mRNA poly(A) tails. This is PAN2-PAN3 deadenylation complex catalytic subunit PAN2 from Coccidioides immitis (strain RS) (Valley fever fungus).